We begin with the raw amino-acid sequence, 108 residues long: Large ribosomal subunit protein uL24 (108 aa).

The protein belongs to the universal ribosomal protein uL24 family. As to quaternary structure, part of the 50S ribosomal subunit.

Its function is as follows. One of two assembly initiator proteins, it binds directly to the 5'-end of the 23S rRNA, where it nucleates assembly of the 50S subunit. One of the proteins that surrounds the polypeptide exit tunnel on the outside of the subunit. This is Large ribosomal subunit protein uL24 from Geotalea daltonii (strain DSM 22248 / JCM 15807 / FRC-32) (Geobacter daltonii).